The sequence spans 349 residues: DNA-directed RNA polymerase subunit alpha (349 aa).

The tract at residues 1–226 is alpha N-terminal domain (alpha-NTD); it reads MLIAQRPTLI…GLFGLAQELN (226 aa). Residues 241-349 form an alpha C-terminal domain (alpha-CTD) region; it reads AALAADLALP…GAEFIETEQY (109 aa). Positions 309 to 349 are disordered; that stretch reads KDSPPGFDPRQAVDTYGTDAYSPSFSDPSDDGAEFIETEQY. Positions 336 to 349 are enriched in acidic residues; that stretch reads PSDDGAEFIETEQY.

The protein belongs to the RNA polymerase alpha chain family. As to quaternary structure, homodimer. The RNAP catalytic core consists of 2 alpha, 1 beta, 1 beta' and 1 omega subunit. When a sigma factor is associated with the core the holoenzyme is formed, which can initiate transcription.

The enzyme catalyses RNA(n) + a ribonucleoside 5'-triphosphate = RNA(n+1) + diphosphate. Functionally, DNA-dependent RNA polymerase catalyzes the transcription of DNA into RNA using the four ribonucleoside triphosphates as substrates. The sequence is that of DNA-directed RNA polymerase subunit alpha from Frankia casuarinae (strain DSM 45818 / CECT 9043 / HFP020203 / CcI3).